A 434-amino-acid polypeptide reads, in one-letter code: Enolase (434 aa).

Substrate is bound by residues His158 and Glu167. Glu210 (proton donor) is an active-site residue. 3 residues coordinate Mg(2+): Asp245, Glu294, and Asp319. 2 residues coordinate substrate: Glu294 and Asp319. The active-site Proton acceptor is Lys344. Substrate contacts are provided by residues 371–374 (SHRS) and Lys395.

Belongs to the enolase family. As to quaternary structure, homodimer. Mg(2+) is required as a cofactor.

Its subcellular location is the cytoplasm. The enzyme catalyses (2R)-2-phosphoglycerate = phosphoenolpyruvate + H2O. It functions in the pathway carbohydrate degradation; glycolysis; pyruvate from D-glyceraldehyde 3-phosphate: step 4/5. This is Enolase (ENO) from Schistosoma japonicum (Blood fluke).